The sequence spans 669 residues: Zinc finger CCCH domain-containing protein 17 (669 aa).

The span at 1 to 11 (MFAPATQPQQQ) shows a compositional bias: low complexity. The tract at residues 1–23 (MFAPATQPQQQHEQKKQSETVSS) is disordered. 3 consecutive C3H1-type zinc fingers follow at residues 34–58 (DCVY…HSEY), 60–86 (RMNP…HPPL), and 114–141 (AKQP…HTPN). Disordered regions lie at residues 150 to 175 (PVEA…EKKL), 285 to 306 (VEDR…PDFS), 376 to 589 (GMRL…VMEE), and 642 to 669 (EEGE…EMLS). Basic and acidic residues-rich tracts occupy residues 164-175 (KPIENNTEEKKL), 285-299 (VEDR…RGNS), 392-406 (SMDR…DTPR), 420-464 (KLRE…EENH), 478-499 (RRRE…ESKP), and 547-579 (NNKD…PKAE). Acidic residues-rich tracts occupy residues 580–589 (VEEEGTVMEE) and 642–659 (EEGE…GEED). The span at 660–669 (IEKKTVEMLS) shows a compositional bias: basic and acidic residues.

The protein is Zinc finger CCCH domain-containing protein 17 of Arabidopsis thaliana (Mouse-ear cress).